Reading from the N-terminus, the 359-residue chain is Prostaglandin D2 receptor (359 aa).

The Extracellular portion of the chain corresponds to 1–21; that stretch reads MKSPFYRCQNTTSVEKGNSAV. Residue N10 is glycosylated (N-linked (GlcNAc...) asparagine). A helical transmembrane segment spans residues 22-42; sequence MGGVLFSTGLLGNLLALGLLA. The Cytoplasmic portion of the chain corresponds to 43–59; the sequence is RSGLGWCSRRPLRPLPS. The chain crosses the membrane as a helical span at residues 60-80; sequence VFYMLVCGLTVTDLLGKCLLS. Residues 81 to 107 lie on the Extracellular side of the membrane; that stretch reads PVVLAAYAQNRSLRVLAPALDNSLCQA. Residue N90 is glycosylated (N-linked (GlcNAc...) asparagine). C105 and C183 are joined by a disulfide. The helical transmembrane segment at 108–128 threads the bilayer; that stretch reads FAFFMSFFGLSSTLQLLAMAL. Residues 129–150 are Cytoplasmic-facing; it reads ECWLSLGHPFFYRRHITLRLGA. A helical transmembrane segment spans residues 151 to 171; it reads LVAPVVSAFSLAFCALPFMGF. Topologically, residues 172–195 are extracellular; the sequence is GKFVQYCPGTWCFIQMVHEEGSLS. The chain crosses the membrane as a helical span at residues 196–216; the sequence is VLGYSVLYSSLMALLVLATVL. The Cytoplasmic portion of the chain corresponds to 217 to 262; that stretch reads CNLGAMRNLYAMHRRLQRHPRSCTRDCAEPRADGREASPQPLEELD. The helical transmembrane segment at 263 to 283 threads the bilayer; sequence HLLLLALMTVLFTMCSLPVIY. The Extracellular segment spans residues 284–310; sequence RAYYGAFKDVKEKNRTSEEAEDLRALR. N297 carries N-linked (GlcNAc...) asparagine glycosylation. The helical transmembrane segment at 311–331 threads the bilayer; that stretch reads FLSVISIVDPWIFIIFRSPVF. The Cytoplasmic portion of the chain corresponds to 332 to 359; the sequence is RIFFHKIFIRPLRYRSRCSNSTNMESSL.

Belongs to the G-protein coupled receptor 1 family. Expressed in retinal choroid, ciliary epithelium, longitudinal and circular ciliary muscles, iris, small intestine and platelet membranes.

Its subcellular location is the cell membrane. In terms of biological role, receptor for prostaglandin D2 (PGD2). The activity of this receptor is mainly mediated by G(s) proteins that stimulate adenylate cyclase, resulting in an elevation of intracellular cAMP. A mobilization of calcium is also observed, but without formation of inositol 1,4,5-trisphosphate. Involved in PLA2G3-dependent maturation of mast cells. PLA2G3 is secreted by immature mast cells and acts on nearby fibroblasts upstream to PTDGS to synthesize PGD2, which in turn promotes mast cell maturation and degranulation via PTGDR. The sequence is that of Prostaglandin D2 receptor (PTGDR) from Homo sapiens (Human).